The chain runs to 289 residues: MTWPLPDRLSINSAISGSAVDLSSFAEFLRRQAPELLPASIKHGGGAVGDQLPHATTIVALKYPGGVLIAGDRRSTQGNMIAGRDVRKVYITDDYTATGIAGTAAIAVEFARLYAVELEHYEKLEGVPLTFAGKVNRLAIMVRGNLAAAMQGLVALPLLASYDIHASDPRSAGRIVSFDAAGGWNIEEEGYQAVGSGSIFAKSSIKKLYAQVTDADSALRVAVEALYDAADDDSATGGPDLVRGIYPTAVTINADGAVDVPEVRIAELAREVIGSRSRADTFGPDGGEK.

The propeptide at 1 to 55 (MTWPLPDRLSINSAISGSAVDLSSFAEFLRRQAPELLPASIKHGGGAVGDQLPHA) is removed in mature form; by autocatalysis. The Nucleophile role is filled by Thr56.

This sequence belongs to the peptidase T1B family. The 20S proteasome core is composed of 14 alpha and 14 beta subunits that assemble into four stacked heptameric rings, resulting in a barrel-shaped structure. The two inner rings, each composed of seven catalytic beta subunits, are sandwiched by two outer rings, each composed of seven alpha subunits. The catalytic chamber with the active sites is on the inside of the barrel. Has a gated structure, the ends of the cylinder being occluded by the N-termini of the alpha-subunits. Is capped by the proteasome-associated ATPase, ARC.

The protein localises to the cytoplasm. It carries out the reaction Cleavage of peptide bonds with very broad specificity.. It functions in the pathway protein degradation; proteasomal Pup-dependent pathway. Its activity is regulated as follows. The formation of the proteasomal ATPase ARC-20S proteasome complex, likely via the docking of the C-termini of ARC into the intersubunit pockets in the alpha-rings, may trigger opening of the gate for substrate entry. Interconversion between the open-gate and close-gate conformations leads to a dynamic regulation of the 20S proteasome proteolysis activity. Functionally, component of the proteasome core, a large protease complex with broad specificity involved in protein degradation. In Mycobacterium marinum (strain ATCC BAA-535 / M), this protein is Proteasome subunit beta.